A 447-amino-acid chain; its full sequence is Probable asparagine--tRNA ligase, cytoplasmic (447 aa).

This sequence belongs to the class-II aminoacyl-tRNA synthetase family.

The protein resides in the cytoplasm. It carries out the reaction tRNA(Asn) + L-asparagine + ATP = L-asparaginyl-tRNA(Asn) + AMP + diphosphate + H(+). This chain is Probable asparagine--tRNA ligase, cytoplasmic, found in Vairimorpha ceranae (strain BRL01) (Microsporidian parasite).